A 495-amino-acid polypeptide reads, in one-letter code: UDP-glycosyltransferase 73E1 (495 aa).

Residues S299, 355–356 (WA), 373–381 (HCGWNSTIE), and 395–398 (FADQ) contribute to the UDP-alpha-D-glucose site.

The protein belongs to the UDP-glycosyltransferase family.

In terms of biological role, may glycosylate diterpenes or flavonols in leaves. The chain is UDP-glycosyltransferase 73E1 from Stevia rebaudiana (Stevia).